The following is a 142-amino-acid chain: uncharacterized protein (142 aa).

The first 26 residues, 1-26 (MITEFIKSFLLFFFLPFFLSMPMIFA), serve as a signal peptide directing secretion.

This is an uncharacterized protein from Schizosaccharomyces pombe (strain 972 / ATCC 24843) (Fission yeast).